The chain runs to 73 residues: Beta-defensin 40 (73 aa).

The signal sequence occupies residues 1-23; it reads MKISCFLLMIFFLSCFQINPVAV. Intrachain disulfides connect Cys-29–Cys-58, Cys-36–Cys-51, and Cys-41–Cys-59.

This sequence belongs to the beta-defensin family. Only expressed in epididymis (corpus, cauda and caput).

It localises to the secreted. Has antibacterial activity. This Mus musculus (Mouse) protein is Beta-defensin 40 (Defb40).